The sequence spans 691 residues: Zinc finger protein 770 (691 aa).

Residue K11 forms a Glycyl lysine isopeptide (Lys-Gly) (interchain with G-Cter in SUMO2) linkage. 3 consecutive C2H2-type zinc fingers follow at residues 27–49 (YVCNICFKHFETPSKLARHYLIH), 55–77 (FECDVCHKTFRQLVHLERHQLTH), and 81–103 (FKCSICQRHFKNLKTFVKHQQLH). Glycyl lysine isopeptide (Lys-Gly) (interchain with G-Cter in SUMO2) cross-links involve residues K112, K121, and K146. 3 C2H2-type zinc fingers span residues 160-182 (HACTICGKMFPSQSKLDRHVLIH), 188-210 (FKCVLCTKSFRQSTHLKIHQLTH), and 216-238 (FQCCFCQKGFKIQSKLLKHKQIH). A disordered region spans residues 258-277 (PLPNKLNANQGGFENGEIGE). K262 is covalently cross-linked (Glycyl lysine isopeptide (Lys-Gly) (interchain with G-Cter in SUMO2)). A C2H2-type 7; degenerate zinc finger spans residues 294-318 (FQCPKCEKCFESEQILNEHSCFAAR). Glycyl lysine isopeptide (Lys-Gly) (interchain with G-Cter in SUMO2) cross-links involve residues K420 and K437. 4 consecutive C2H2-type zinc fingers follow at residues 475 to 497 (CPCDKCEKVFPSISKLKRHYLIH), 503 to 525 (FGCNICGKSFRQSAHLKRHEQTH), 625 to 647 (YRCSVCAKSFRSPSKLERHYLIH), and 653 to 675 (FECSVCGKTFRQAPHWKRHQLTH). A Glycyl lysine isopeptide (Lys-Gly) (interchain with G-Cter in SUMO2) cross-link involves residue K683.

The protein belongs to the krueppel C2H2-type zinc-finger protein family.

It localises to the nucleus. Functionally, may be involved in transcriptional regulation. This Homo sapiens (Human) protein is Zinc finger protein 770 (ZNF770).